A 387-amino-acid polypeptide reads, in one-letter code: Alkanesulfonate monooxygenase (387 aa).

It belongs to the SsuD family.

It carries out the reaction an alkanesulfonate + FMNH2 + O2 = an aldehyde + FMN + sulfite + H2O + 2 H(+). Functionally, catalyzes the desulfonation of aliphatic sulfonates. In Cupriavidus metallidurans (strain ATCC 43123 / DSM 2839 / NBRC 102507 / CH34) (Ralstonia metallidurans), this protein is Alkanesulfonate monooxygenase.